We begin with the raw amino-acid sequence, 1264 residues long: MPVVWPTLLDLSRDECKRILRKLELEAYAGVISALRAQGDLTKEKKDLLGELSKVLSISTERHRAEVRRAVNDERLTTIAHKMNLSLYLGERPSYSMSGPNSSSEWSIEGRRLVPLMPRLVPQTAFTVTANAVANAAVQHNASLPVPAETASKDGVSCSDEDEKPRKRRRTNSSSSSPVVLKEVPKAVVPVSKTITVPVSGSPKMSNIMQSIANSLPPHMSPVKITFTKPSTQTTNTTTQKVIIVTTSPSSTFVPNILSKSHNYAAVTKLVPTSVIASTTQKPPVVITASQASLVTSSSNGNSSSTSSPISSTVAVTTVVSSTPSVVMSTVAQGVSTSAIKVASTRLPSPKSLVSGPTQILAQFPKQHQQSPKQQLQQVQQQTQQPVAQPSSVSQQQQPQQSALPPGIKPTIQIKQESGVKIITQQVQPSKILPKPVTATLPTSSNSPIMVVSSNGAIMTTKLVTTPTGTQATYTRPTVSPSLGRVATTPGAATYVKTTSGSIITVVPKSLATLGGKIISSNIVSGTTTKITTIPMTSKPNVIVVQKTTGKGTTIQGLPGKNVVTTLLNAGGEKTLQTVPAGAKPAIITATRPITKMIVTQPKGIGSAVQPAAKIIPTKIVYGQQGKTQVLIKPKPVTFQATVVSEQTRQLVTETLQQASRVADASNSSAQEGKEEPQGYTDSSSSSTESSQSSQDSQPVVHVIASRRQDWSEHEIAMETSPTIIYQDVSSESQSATSTIKALLELQQTTVKEKLESKPRQPTIDLSQMAVPIQMTQEKRHSPESPSIAVVESELVAEYITTVSHRSQPQQPSQPQRTLLQHVAQSQTATQTSVVVKSIPASSPGAITHIMQQALSSHTAFTKHSEELGTEEGEVEEMDTLDPQTGLFYRSALTQSQSTKQQKLSQPQLEQTQLQVKTLQCFQTKQKQTIHLQADQLQHKLTQMPQLSIRHQKLNPLQQEQAQPKPDAQHTQHTVVAKDRQLPTLMAQPPQTVVQVLAVKTTQQLPKLQQAPNQPKIYVQPQTPQSQMALPSSEKQPASQVEQPIITQGSSVTKITFEGRQPPTVTKITGGSSVPKLTSPVTSISPIQASEKTAVSDILQMSLMEAQIDTNVEHMVVDPPKKALATNVLTGEAGALPSTHVVVAGMTKCRESCSSPSAVGPPLTTRKIEAAGVPTTGQFMRIQNVGQKKAEESPTEIIIQAIPQYAIPCHSSSNVVVEPSGLLELNNFTSQQLDDDETAMEQDIDSSTEDGTEPSPSQSAVERS.

The segment at 1-442 is interaction with BRCA2; the sequence is MPVVWPTLLD…LPKPVTATLP (442 aa). Positions 16–114 constitute an ENT domain; sequence CKRILRKLEL…EWSIEGRRLV (99 aa). An interaction with ZMYND11 region spans residues 118–122; that stretch reads PRLVP. The disordered stretch occupies residues 145-179; it reads PVPAETASKDGVSCSDEDEKPRKRRRTNSSSSSPV. Phosphothreonine is present on threonine 171. Phosphoserine occurs at positions 173 and 177. O-linked (GlcNAc) serine glycans are attached at residues serine 192 and serine 200. Serine 202 bears the Phosphoserine mark. O-linked (GlcNAc) threonine glycosylation occurs at threonine 235. The segment covering 364–406 has biased composition (low complexity); that stretch reads FPKQHQQSPKQQLQQVQQQTQQPVAQPSSVSQQQQPQQSALPP. The segment at 364–407 is disordered; the sequence is FPKQHQQSPKQQLQQVQQQTQQPVAQPSSVSQQQQPQQSALPPG. O-linked (GlcNAc) threonine glycans are attached at residues threonine 465 and threonine 470. Serine 521 is a glycosylation site (O-linked (GlcNAc) serine). Residues 660–671 are compositionally biased toward polar residues; sequence SRVADASNSSAQ. The segment at 660-700 is disordered; it reads SRVADASNSSAQEGKEEPQGYTDSSSSSTESSQSSQDSQPV. Residues 681–698 are compositionally biased toward low complexity; sequence TDSSSSSTESSQSSQDSQ. A phosphoserine mark is found at serine 782 and serine 785. A glycan (O-linked (GlcNAc) threonine) is linked at threonine 1069. Serine 1085 carries the post-translational modification Phosphoserine. Positions 1232–1264 are disordered; the sequence is QLDDDETAMEQDIDSSTEDGTEPSPSQSAVERS. The segment covering 1233–1252 has biased composition (acidic residues); the sequence is LDDDETAMEQDIDSSTEDGT. Residues 1254-1264 are compositionally biased toward polar residues; that stretch reads PSPSQSAVERS.

Homodimer. Interacts with the transactivation domain of BRCA2. Interacts with CBX1 (via chromoshadow domain). Interacts with ZMYND11. Does not interact with CBX3 or CBX5. Component of a nuclear receptor-mediated transcription complex composed of at least ZNF335, CCAR2 and EMSY; the complex stimulates the transcription of nuclear receptor target genes such as SOX9 and HOXA1. Within the complex interacts with CCAR2 and ZNF335. Components of this complex may associate with components of a histone methylation complex to form a complex at least composed of ZNF335, HCFC1, CCAR2, EMSY, MKI67, RBBP5, ASH2L and WDR5. Within this complex, interacts with ASH2L and RBBP5.

It localises to the nucleus. Functionally, regulator which is able to repress transcription, possibly via its interaction with a multiprotein chromatin remodeling complex that modifies the chromatin. Its interaction with BRCA2 suggests that it may play a central role in the DNA repair function of BRCA2. Mediates ligand-dependent transcriptional activation by nuclear hormone receptors. The chain is BRCA2-interacting transcriptional repressor EMSY from Mus musculus (Mouse).